A 457-amino-acid polypeptide reads, in one-letter code: Siroheme synthase (457 aa).

A precorrin-2 dehydrogenase /sirohydrochlorin ferrochelatase region spans residues 1 to 204 (MDHLPIFCQL…NDQKAITETT (204 aa)). NAD(+) is bound by residues 22 to 23 (DV) and 43 to 44 (LA). The residue at position 128 (serine 128) is a Phosphoserine. Residues 216 to 457 (GEVVLVGAGP…RDKLNWFSNH (242 aa)) are uroporphyrinogen-III C-methyltransferase. Proline 225 lines the S-adenosyl-L-methionine pocket. Catalysis depends on aspartate 248, which acts as the Proton acceptor. Lysine 270 functions as the Proton donor in the catalytic mechanism. S-adenosyl-L-methionine is bound by residues 301–303 (GGD), isoleucine 306, 331–332 (TA), methionine 382, and glycine 411.

In the N-terminal section; belongs to the precorrin-2 dehydrogenase / sirohydrochlorin ferrochelatase family. This sequence in the C-terminal section; belongs to the precorrin methyltransferase family.

It carries out the reaction uroporphyrinogen III + 2 S-adenosyl-L-methionine = precorrin-2 + 2 S-adenosyl-L-homocysteine + H(+). It catalyses the reaction precorrin-2 + NAD(+) = sirohydrochlorin + NADH + 2 H(+). The enzyme catalyses siroheme + 2 H(+) = sirohydrochlorin + Fe(2+). It participates in cofactor biosynthesis; adenosylcobalamin biosynthesis; precorrin-2 from uroporphyrinogen III: step 1/1. It functions in the pathway cofactor biosynthesis; adenosylcobalamin biosynthesis; sirohydrochlorin from precorrin-2: step 1/1. The protein operates within porphyrin-containing compound metabolism; siroheme biosynthesis; precorrin-2 from uroporphyrinogen III: step 1/1. Its pathway is porphyrin-containing compound metabolism; siroheme biosynthesis; siroheme from sirohydrochlorin: step 1/1. It participates in porphyrin-containing compound metabolism; siroheme biosynthesis; sirohydrochlorin from precorrin-2: step 1/1. Functionally, multifunctional enzyme that catalyzes the SAM-dependent methylations of uroporphyrinogen III at position C-2 and C-7 to form precorrin-2 via precorrin-1. Then it catalyzes the NAD-dependent ring dehydrogenation of precorrin-2 to yield sirohydrochlorin. Finally, it catalyzes the ferrochelation of sirohydrochlorin to yield siroheme. The sequence is that of Siroheme synthase from Escherichia coli O17:K52:H18 (strain UMN026 / ExPEC).